Here is a 128-residue protein sequence, read N- to C-terminus: Small ribosomal subunit protein uS9 (128 aa).

Residues 106 to 128 (SRKVERKKPGRPKARKKFQFSKR) are disordered. Basic residues predominate over residues 109-128 (VERKKPGRPKARKKFQFSKR).

It belongs to the universal ribosomal protein uS9 family.

This is Small ribosomal subunit protein uS9 from Azobacteroides pseudotrichonymphae genomovar. CFP2.